Reading from the N-terminus, the 56-residue chain is Large ribosomal subunit protein bL32 (56 aa).

Positions 1–28 are disordered; that stretch reads MAVQQNRKTRSKRGMRRSHDALTTAALS. Basic residues predominate over residues 7 to 16; the sequence is RKTRSKRGMR.

The protein belongs to the bacterial ribosomal protein bL32 family.

The protein is Large ribosomal subunit protein bL32 of Vibrio vulnificus (strain CMCP6).